Reading from the N-terminus, the 496-residue chain is Cytosol aminopeptidase (496 aa).

2 residues coordinate Mn(2+): Lys-258 and Asp-263. Residue Lys-270 is part of the active site. Mn(2+) contacts are provided by Asp-281, Asp-340, and Glu-342. The active site involves Arg-344.

It belongs to the peptidase M17 family. Mn(2+) is required as a cofactor.

The protein localises to the cytoplasm. The enzyme catalyses Release of an N-terminal amino acid, Xaa-|-Yaa-, in which Xaa is preferably Leu, but may be other amino acids including Pro although not Arg or Lys, and Yaa may be Pro. Amino acid amides and methyl esters are also readily hydrolyzed, but rates on arylamides are exceedingly low.. It catalyses the reaction Release of an N-terminal amino acid, preferentially leucine, but not glutamic or aspartic acids.. Its function is as follows. Presumably involved in the processing and regular turnover of intracellular proteins. Catalyzes the removal of unsubstituted N-terminal amino acids from various peptides. This Helicobacter pylori (strain J99 / ATCC 700824) (Campylobacter pylori J99) protein is Cytosol aminopeptidase (pepA).